We begin with the raw amino-acid sequence, 211 residues long: Thiamine-phosphate synthase (211 aa).

4-amino-2-methyl-5-(diphosphooxymethyl)pyrimidine-binding positions include 37–41 and N69; that span reads QLRIK. Mg(2+) is bound by residues D70 and D89. S108 is a binding site for 4-amino-2-methyl-5-(diphosphooxymethyl)pyrimidine. 134-136 lines the 2-[(2R,5Z)-2-carboxy-4-methylthiazol-5(2H)-ylidene]ethyl phosphate pocket; the sequence is TQT. Position 137 (K137) interacts with 4-amino-2-methyl-5-(diphosphooxymethyl)pyrimidine. 2-[(2R,5Z)-2-carboxy-4-methylthiazol-5(2H)-ylidene]ethyl phosphate contacts are provided by residues G166 and 186-187; that span reads VS.

Belongs to the thiamine-phosphate synthase family. It depends on Mg(2+) as a cofactor.

It carries out the reaction 2-[(2R,5Z)-2-carboxy-4-methylthiazol-5(2H)-ylidene]ethyl phosphate + 4-amino-2-methyl-5-(diphosphooxymethyl)pyrimidine + 2 H(+) = thiamine phosphate + CO2 + diphosphate. The catalysed reaction is 2-(2-carboxy-4-methylthiazol-5-yl)ethyl phosphate + 4-amino-2-methyl-5-(diphosphooxymethyl)pyrimidine + 2 H(+) = thiamine phosphate + CO2 + diphosphate. It catalyses the reaction 4-methyl-5-(2-phosphooxyethyl)-thiazole + 4-amino-2-methyl-5-(diphosphooxymethyl)pyrimidine + H(+) = thiamine phosphate + diphosphate. Its pathway is cofactor biosynthesis; thiamine diphosphate biosynthesis; thiamine phosphate from 4-amino-2-methyl-5-diphosphomethylpyrimidine and 4-methyl-5-(2-phosphoethyl)-thiazole: step 1/1. Its function is as follows. Condenses 4-methyl-5-(beta-hydroxyethyl)thiazole monophosphate (THZ-P) and 2-methyl-4-amino-5-hydroxymethyl pyrimidine pyrophosphate (HMP-PP) to form thiamine monophosphate (TMP). The chain is Thiamine-phosphate synthase from Salmonella agona (strain SL483).